A 344-amino-acid chain; its full sequence is MSVKPNYSLKPYNTFGVDYACSELISVETKSELIRICSKLFAEDKPYLVLGGGSNILLTENYLGTVVQVCSKGIVCHEDDEFYYLSVEAGEEWHQLVEYCLATAMPGLENLALIPGTVGAAPIQNIGAYGVEFMDVCDWVEFLDLRDGALTRYKQEECQFGYRESIFKGALKGISVITGVGIKLAKKWRPNLSYGPLKRFENTGVTPKEIFDCICSTRNEKLPDPRLIGNAGSFFKNPIISFSKFQELIGKHPSLVGYPLPDGFVKLAAGWLIDNAGLKGASVGDAAVHEQQALVLINRGQASGKDILKLALKVIETIKIQFGVTLEAEPRVIGAYGEKELIDD.

Residues 17–187 form the FAD-binding PCMH-type domain; the sequence is VDYACSELIS…TGVGIKLAKK (171 aa). Arginine 163 is an active-site residue. Serine 233 (proton donor) is an active-site residue. Glutamate 329 is a catalytic residue.

This sequence belongs to the MurB family. It depends on FAD as a cofactor.

It localises to the cytoplasm. It catalyses the reaction UDP-N-acetyl-alpha-D-muramate + NADP(+) = UDP-N-acetyl-3-O-(1-carboxyvinyl)-alpha-D-glucosamine + NADPH + H(+). Its pathway is cell wall biogenesis; peptidoglycan biosynthesis. In terms of biological role, cell wall formation. This is UDP-N-acetylenolpyruvoylglucosamine reductase from Shewanella sediminis (strain HAW-EB3).